A 383-amino-acid chain; its full sequence is Acetylornithine deacetylase (383 aa).

His80 is a Zn(2+) binding site. The active site involves Asp82. Asp112 lines the Zn(2+) pocket. Residue Glu144 is part of the active site. Positions 145, 169, and 355 each coordinate Zn(2+).

The protein belongs to the peptidase M20A family. ArgE subfamily. In terms of assembly, homodimer. The cofactor is Zn(2+). Requires Co(2+) as cofactor. It depends on glutathione as a cofactor.

Its subcellular location is the cytoplasm. The enzyme catalyses N(2)-acetyl-L-ornithine + H2O = L-ornithine + acetate. It participates in amino-acid biosynthesis; L-arginine biosynthesis; L-ornithine from N(2)-acetyl-L-ornithine (linear): step 1/1. In terms of biological role, catalyzes the hydrolysis of the amide bond of N(2)-acetylated L-amino acids. Cleaves the acetyl group from N-acetyl-L-ornithine to form L-ornithine, an intermediate in L-arginine biosynthesis pathway, and a branchpoint in the synthesis of polyamines. The polypeptide is Acetylornithine deacetylase (Escherichia coli O17:K52:H18 (strain UMN026 / ExPEC)).